A 64-amino-acid chain; its full sequence is Small ribosomal subunit protein eS17 (64 aa).

The protein belongs to the eukaryotic ribosomal protein eS17 family.

In Methanospirillum hungatei JF-1 (strain ATCC 27890 / DSM 864 / NBRC 100397 / JF-1), this protein is Small ribosomal subunit protein eS17.